The chain runs to 243 residues: 1-(5-phosphoribosyl)-5-[(5-phosphoribosylamino)methylideneamino] imidazole-4-carboxamide isomerase (243 aa).

The active-site Proton acceptor is the D9. D131 serves as the catalytic Proton donor.

It belongs to the HisA/HisF family.

It localises to the cytoplasm. It catalyses the reaction 1-(5-phospho-beta-D-ribosyl)-5-[(5-phospho-beta-D-ribosylamino)methylideneamino]imidazole-4-carboxamide = 5-[(5-phospho-1-deoxy-D-ribulos-1-ylimino)methylamino]-1-(5-phospho-beta-D-ribosyl)imidazole-4-carboxamide. It functions in the pathway amino-acid biosynthesis; L-histidine biosynthesis; L-histidine from 5-phospho-alpha-D-ribose 1-diphosphate: step 4/9. The sequence is that of 1-(5-phosphoribosyl)-5-[(5-phosphoribosylamino)methylideneamino] imidazole-4-carboxamide isomerase from Campylobacter jejuni (strain RM1221).